Consider the following 239-residue polypeptide: ATP synthase subunit a, chloroplastic (239 aa).

The next 5 membrane-spanning stretches (helical) occupy residues 30–50, 87–107, 126–146, 191–211, and 212–232; these read VLLVSWVAIIILLLLAILGTF, VPFISTLFLFIFVSNWLGALV, INTTVALAMLTSVSYFYAGLS, LVVAVFNLLFPLFLPLPVMVL, and GLFASSIQALIFATLSASYIG.

The protein belongs to the ATPase A chain family. In terms of assembly, F-type ATPases have 2 components, CF(1) - the catalytic core - and CF(0) - the membrane proton channel. CF(1) has five subunits: alpha(3), beta(3), gamma(1), delta(1), epsilon(1). CF(0) has four main subunits: a, b, b' and c.

The protein resides in the plastid. Its subcellular location is the chloroplast thylakoid membrane. Functionally, key component of the proton channel; it plays a direct role in the translocation of protons across the membrane. The polypeptide is ATP synthase subunit a, chloroplastic (Cyanidium caldarium (Red alga)).